The chain runs to 202 residues: Holliday junction resolvase RecU (202 aa).

Mg(2+) contacts are provided by Thr85, Asp87, Glu100, and Gln119.

This sequence belongs to the RecU family. It depends on Mg(2+) as a cofactor.

Its subcellular location is the cytoplasm. The catalysed reaction is Endonucleolytic cleavage at a junction such as a reciprocal single-stranded crossover between two homologous DNA duplexes (Holliday junction).. Endonuclease that resolves Holliday junction intermediates in genetic recombination. Cleaves mobile four-strand junctions by introducing symmetrical nicks in paired strands. Promotes annealing of linear ssDNA with homologous dsDNA. Required for DNA repair, homologous recombination and chromosome segregation. This is Holliday junction resolvase RecU from Streptococcus equi subsp. zooepidemicus (strain H70).